The chain runs to 388 residues: S-adenosylmethionine synthase (388 aa).

Position 16 (histidine 16) interacts with ATP. Aspartate 18 provides a ligand contact to Mg(2+). Position 44 (glutamate 44) interacts with K(+). Glutamate 57 and glutamine 100 together coordinate L-methionine. The tract at residues 100–110 (QSPDIAQGVDK) is flexible loop. ATP-binding positions include 167–169 (DAK), 233–234 (RF), aspartate 242, 248–249 (RK), alanine 265, and lysine 269. Aspartate 242 is a binding site for L-methionine. Lysine 273 contacts L-methionine.

It belongs to the AdoMet synthase family. As to quaternary structure, homotetramer; dimer of dimers. Requires Mg(2+) as cofactor. The cofactor is K(+).

It localises to the cytoplasm. The catalysed reaction is L-methionine + ATP + H2O = S-adenosyl-L-methionine + phosphate + diphosphate. It functions in the pathway amino-acid biosynthesis; S-adenosyl-L-methionine biosynthesis; S-adenosyl-L-methionine from L-methionine: step 1/1. Functionally, catalyzes the formation of S-adenosylmethionine (AdoMet) from methionine and ATP. The overall synthetic reaction is composed of two sequential steps, AdoMet formation and the subsequent tripolyphosphate hydrolysis which occurs prior to release of AdoMet from the enzyme. The protein is S-adenosylmethionine synthase of Polynucleobacter necessarius subsp. necessarius (strain STIR1).